Here is a 141-residue protein sequence, read N- to C-terminus: Hemoglobin subunit alpha (141 aa).

Residues 1 to 141 (VLSPADKTNI…VSTVLTSKYR (141 aa)) enclose the Globin domain. S3 carries the phosphoserine modification. Residue K7 is modified to N6-succinyllysine. Position 8 is a phosphothreonine (T8). Position 11 is an N6-succinyllysine (K11). An N6-acetyllysine; alternate modification is found at K16. K16 is modified (N6-succinyllysine; alternate). A Phosphotyrosine modification is found at Y24. S35 is subject to Phosphoserine. K40 carries the post-translational modification N6-succinyllysine. S49 bears the Phosphoserine mark. H58 contacts O2. H87 is a binding site for heme b. S102 carries the phosphoserine modification. Phosphothreonine is present on T108. S124 carries the post-translational modification Phosphoserine. 2 positions are modified to phosphothreonine: T134 and T137. Phosphoserine is present on S138.

It belongs to the globin family. Heterotetramer of two alpha chains and two beta chains. As to expression, red blood cells.

Involved in oxygen transport from the lung to the various peripheral tissues. Functionally, hemopressin acts as an antagonist peptide of the cannabinoid receptor CNR1. Hemopressin-binding efficiently blocks cannabinoid receptor CNR1 and subsequent signaling. The polypeptide is Hemoglobin subunit alpha (HBA) (Canis lupus familiaris (Dog)).